The following is a 37-amino-acid chain: Cytochrome b6-f complex subunit 7 (37 aa).

A helical transmembrane segment spans residues 11–29; the sequence is AVLLMVLVLVGLAWGFLLL.

This sequence belongs to the PetM family. The 4 large subunits of the cytochrome b6-f complex are cytochrome b6, subunit IV (17 kDa polypeptide, PetD), cytochrome f and the Rieske protein, while the 4 small subunits are PetG, PetL, PetM and PetN. The complex functions as a dimer.

The protein localises to the cellular thylakoid membrane. Its function is as follows. Component of the cytochrome b6-f complex, which mediates electron transfer between photosystem II (PSII) and photosystem I (PSI), cyclic electron flow around PSI, and state transitions. This is Cytochrome b6-f complex subunit 7 from Rippkaea orientalis (strain PCC 8801 / RF-1) (Cyanothece sp. (strain PCC 8801)).